Here is a 264-residue protein sequence, read N- to C-terminus: S-adenosylmethionine decarboxylase proenzyme (264 aa).

Serine 113 serves as the catalytic Schiff-base intermediate with substrate; via pyruvic acid. Serine 113 is modified (pyruvic acid (Ser); by autocatalysis). The Proton acceptor; for processing activity role is filled by histidine 118. Residue cysteine 141 is the Proton donor; for catalytic activity of the active site.

This sequence belongs to the prokaryotic AdoMetDC family. Type 2 subfamily. In terms of assembly, heterooctamer of four alpha and four beta chains arranged as a tetramer of alpha/beta heterodimers. It depends on pyruvate as a cofactor. Post-translationally, is synthesized initially as an inactive proenzyme. Formation of the active enzyme involves a self-maturation process in which the active site pyruvoyl group is generated from an internal serine residue via an autocatalytic post-translational modification. Two non-identical subunits are generated from the proenzyme in this reaction, and the pyruvate is formed at the N-terminus of the alpha chain, which is derived from the carboxyl end of the proenzyme. The post-translation cleavage follows an unusual pathway, termed non-hydrolytic serinolysis, in which the side chain hydroxyl group of the serine supplies its oxygen atom to form the C-terminus of the beta chain, while the remainder of the serine residue undergoes an oxidative deamination to produce ammonia and the pyruvoyl group blocking the N-terminus of the alpha chain.

The enzyme catalyses S-adenosyl-L-methionine + H(+) = S-adenosyl 3-(methylsulfanyl)propylamine + CO2. It participates in amine and polyamine biosynthesis; S-adenosylmethioninamine biosynthesis; S-adenosylmethioninamine from S-adenosyl-L-methionine: step 1/1. Functionally, catalyzes the decarboxylation of S-adenosylmethionine to S-adenosylmethioninamine (dcAdoMet), the propylamine donor required for the synthesis of the polyamines spermine and spermidine from the diamine putrescine. In Xanthomonas oryzae pv. oryzae (strain MAFF 311018), this protein is S-adenosylmethionine decarboxylase proenzyme.